Consider the following 1201-residue polypeptide: Potassium/sodium hyperpolarization-activated cyclic nucleotide-gated channel 4 (1201 aa).

Over 1 to 263 (MDKLPPSMRK…IIHPYSDFRF (263 aa)) the chain is Cytoplasmic. Residues 24–183 (WIMDEEEDGE…PASASCEQPS (160 aa)) are disordered. Positions 26–36 (MDEEEDGEEEG) are enriched in acidic residues. The span at 105–118 (SRGGGSGGAGGGSS) shows a compositional bias: gly residues. The span at 121-132 (HLHDSAEERRLI) shows a compositional bias: basic and acidic residues. Ser-139 carries the post-translational modification Phosphoserine. The span at 164–174 (ASPPPQQPPQP) shows a compositional bias: pro residues. Residues 209–260 (GQSGFMQRQFGAMLQPGVNKFSLRMFGSQKAVEREQERVKSAGFWIIHPYSD) are involved in subunit assembly. Residues 264–286 (YWDLTMLLLMVGNLIIIPVGITF) form a helical membrane-spanning segment. Over 287-293 (FKDENTT) the chain is Extracellular. The helical transmembrane segment at 294–314 (PWIVFNVVSDTFFLIDLVLNF) threads the bilayer. Over 315-336 (RTGIVVEDNTEIILDPQRIKMK) the chain is Cytoplasmic. A helical membrane pass occupies residues 337-359 (YLKSWFVVDFISSIPVDYIFLIV). Residues 360–378 (ETRIDSEVYKTARALRIVR) lie on the Extracellular side of the membrane. Residues 379–399 (FTKILSLLRLLRLSRLIRYIH) traverse the membrane as a helical; Voltage-sensor segment. The Cytoplasmic portion of the chain corresponds to 400–413 (QWEEIFHMTYDLAS). The chain crosses the membrane as a helical span at residues 414–436 (AVVRIVNLIGMMLLLCHWDGCLQ). The Extracellular portion of the chain corresponds to 437–464 (FLVPMLQDFPHDCWVSINGMVNNSWGKQ). Asn-458 carries N-linked (GlcNAc...) asparagine glycosylation. Residues 465 to 486 (YSYALFKAMSHMLCIGYGRQAP) constitute an intramembrane region (pore-forming). Topologically, residues 487 to 491 (VGMSD) are extracellular. A helical transmembrane segment spans residues 492 to 517 (VWLTMLSMIVGATCYAMFIGHATALI). Residues 518–1201 (QSLDSSRRQY…PVRSKLPSNL (684 aa)) are Cytoplasmic-facing. Residues Tyr-559, Lys-562, Phe-564, and Glu-566 each coordinate 3',5'-cyclic GMP. 7 residues coordinate 3',5'-cyclic AMP: Gly-659, Glu-660, Cys-662, Arg-669, Thr-670, Val-673, and Arg-710. Disordered stretches follow at residues 804-902 (AIFR…TAAA) and 914-1201 (ALGG…PSNL). Low complexity-rich tracts occupy residues 831–856 (SLIP…SSSS) and 866–880 (SAPP…SSSS). Positions 881-894 (SPPPGACGSPPAPT) are enriched in pro residues. 2 stretches are compositionally biased toward low complexity: residues 915-939 (LGGS…SPQA) and 967-995 (RSPS…SSTP). A compositionally biased stretch (pro residues) spans 1029 to 1042 (GHSPGPPRTFPSAP). Low complexity predominate over residues 1045-1056 (ASGSHGSLLLPP). Phosphoserine occurs at positions 1105 and 1108. The span at 1122-1134 (AGGGSGSSGGLGP) shows a compositional bias: gly residues.

Belongs to the potassium channel HCN family. In terms of assembly, homotetramer. The potassium channel is composed of a homo- or heterotetrameric complex of pore-forming subunits. Interacts with PEX5L with a 4:4 HCN4:PEX5L stoichiometry; reduces the effects of cAMP on the voltage-dependence and rate of activation. Interacts with IRAG1; regulates HCN4 channel activity. Interacts with IRAG2; regulates HCN4 channel activity. S-palmitoylated. Detected in a subset of elongated cells in taste buds.

It is found in the cell membrane. The catalysed reaction is K(+)(in) = K(+)(out). It catalyses the reaction Na(+)(in) = Na(+)(out). Its activity is regulated as follows. Activated by cAMP, and to a lesser extent by cGMP and cCMP. cAMP binding causes a conformation change that leads to the assembly of an active tetramer and channel opening. Binding of cAMP removes a tonic inhibition conferred by cyclic nucleotide-binding domain (CNBD) on channel opening. Cyclic dinucleotides can modulate HCN4 channel; cyclic dinucleotides acting as potent antagonists of cAMP. Inhibited by extracellular Cs(+) ions. Auxiliary subunits can also regulate HCN4 channel. IRAG1 causes a gain-of-function by shifting HCN4 activation to more depolarized membrane potentials in the absence of cAMP. In contrast, IRAG2 causes a loss-of-function by inhibiting cAMP-dependent potentiation of HCN4 activation. Its function is as follows. Hyperpolarization-activated ion channel that are permeable to Na(+) and K(+) ions with very slow activation and inactivation. Exhibits higher selectivity for K(+) over Na(+) ions. Contributes to the native pacemaker currents in heart (If) that regulate the rhythm of heart beat. Contributes to the native pacemaker currents in neurons (Ih). May mediate responses to sour stimuli. The sequence is that of Potassium/sodium hyperpolarization-activated cyclic nucleotide-gated channel 4 (Hcn4) from Mus musculus (Mouse).